The following is a 391-amino-acid chain: Ferrochelatase (391 aa).

Fe cation contacts are provided by H196 and E281.

This sequence belongs to the ferrochelatase family.

It localises to the cytoplasm. It catalyses the reaction heme b + 2 H(+) = protoporphyrin IX + Fe(2+). It functions in the pathway porphyrin-containing compound metabolism; protoheme biosynthesis; protoheme from protoporphyrin-IX: step 1/1. Its function is as follows. Catalyzes the ferrous insertion into protoporphyrin IX. In Prochlorococcus marinus (strain NATL2A), this protein is Ferrochelatase.